Consider the following 613-residue polypeptide: RNA polymerase sigma factor RpoD (613 aa).

Residues 2-80 are sigma-70 factor domain-1; the sequence is EQNPQSQLKL…TADEDAAEAA (79 aa). Residues 176–213 form a disordered region; it reads PTATHVGSELSQEDLDDDEDEDEEDGDDDSADDDNSID. A compositionally biased stretch (acidic residues) spans 186 to 212; it reads SQEDLDDDEDEDEEDGDDDSADDDNSI. The tract at residues 379–449 is sigma-70 factor domain-2; sequence MVEANLRLVI…TRSIADQART (71 aa). Positions 403-406 match the Interaction with polymerase core subunit RpoC motif; it reads DLIQ. Residues 458–534 are sigma-70 factor domain-3; the sequence is ETINKLNRIS…DTTLELPLDS (77 aa). The interval 547 to 600 is sigma-70 factor domain-4; the sequence is VLAGLTAREAKVLRMRFGIDMNTDYTLEEVGKQFDVTRERIRQIEAKALRKLRH. Positions 573–592 form a DNA-binding region, H-T-H motif; that stretch reads LEEVGKQFDVTRERIRQIEA. An interaction with anti-sigma factors region spans residues 584–599; that stretch reads RERIRQIEAKALRKLR.

Belongs to the sigma-70 factor family. RpoD/SigA subfamily. As to quaternary structure, interacts transiently with the RNA polymerase catalytic core formed by RpoA, RpoB, RpoC and RpoZ (2 alpha, 1 beta, 1 beta' and 1 omega subunit) to form the RNA polymerase holoenzyme that can initiate transcription. Identified in a complex containing RpoD, the RNA polymerase subunits RpoA, RpoB and RpoZ, CRP and DNA. Interacts with Rsd; this prevents interaction with the RNA polymerase catalytic core and with promoter DNA, and as a consequence, promotes transcription from promoters that require alternative sigma factors. Interacts with phage T4 AsiA; this interferes with binding to DNA and to the RNA polymerase. In terms of assembly, (Microbial infection) Interacts with Escherichia phage lambda antitermination protein Q.

It localises to the cytoplasm. Sigma factors are initiation factors that promote the attachment of RNA polymerase to specific initiation sites and are then released. This sigma factor is the primary sigma factor during exponential growth. Preferentially transcribes genes associated with fast growth, such as ribosomal operons, other protein-synthesis related genes, rRNA- and tRNA-encoding genes and prfB. This is RNA polymerase sigma factor RpoD from Escherichia coli (strain K12).